We begin with the raw amino-acid sequence, 527 residues long: Sensory neuron membrane protein 1 (527 aa).

Topologically, residues 1-10 (MQLQKPLKIG) are cytoplasmic. Residues 11 to 31 (LGMMGAGLFGIIFGWVLFPVI) traverse the membrane as a helical segment. Residues 32 to 456 (LKSQLKKEMA…LKNQLFIPKR (425 aa)) lie on the Extracellular side of the membrane. Asn67 and Asn229 each carry an N-linked (GlcNAc...) asparagine glycan. Disulfide bonds link Cys268-Cys333, Cys297-Cys352, and Cys335-Cys341. Asn440 is a glycosylation site (N-linked (GlcNAc...) asparagine). Residues 457–477 (IVSVVKWLLAGVGFVGLVGSL) traverse the membrane as a helical segment. The Cytoplasmic segment spans residues 478–527 (VYQFKGKMINFALSPSSAQVTKVNPEINQQNQPKDISIIGESQNPPKVDM).

The protein belongs to the CD36 family. In terms of tissue distribution, detected in both male and female antennal tissues. Expression is two to three fold higher in male compared to female antenna.

Its subcellular location is the cell membrane. In terms of biological role, plays an olfactory role that is not restricted to pheromone sensitivity. The protein is Sensory neuron membrane protein 1 of Ostrinia furnacalis (Asian corn borer).